Here is a 1438-residue protein sequence, read N- to C-terminus: MAMTEQQKFKVLADQIKISNQLDAEILNSGELTRIDVSNKNRTWEFHITLPQFLAHEDYLLFINAIEQEFKDIANVTCRFTVTNGTNQDEHAIKYFGHCIDQTALSPKVKGQLKQKKLIMSGKVLKVMVSNDIERNHFDKACNGSLIKAFRNCGFDIDKIIFETNDNDQEQNLASLEAHIQEEDEQSARLATEKLEKMKAEKSKQQDNNESAVDKCQIGKPIQIENIKPIESIIEEEYKVAIEGVIFDINLKELKSGRHIVEIKVTDYTDSLVLKMFTRKNKDDLEHFKALSVGKWVRAQGRIEEDTFIRDLVMMMSDIEEIKKATKKDKAEEKRVEFHLHTAMSQMDGIPNIGAYVKQAADWGHPAIAVTDHNVVQAFPDAHAAAEKHGIKMIYGMEGMLVDDGVPIAYKPQDVVLKDATYVVFDVETTGLSNQYDKIIELAAVKVHNGEIIDKFERFSNPHERLSETIINLTHITDDMLVDAPEIEEVLTEFKEWVGDAIFVAHNASFDMGFIDTGYERLGFGPSTNGVIDTLELSRTINTEYGKHGLNFLAKKYGVELTQHHRAIYDTEATAYIFIKMVQQMKELGVLNHNEINKKLSNEDAYKRARPSHVTLIVQNQQGLKNLFKIVSASLVKYFYRTPRIPRSLLDEYREGLLVGTACDEGELFTAVMQKDQSQVEKIAKYYDFIEIQPPALYQDLIDRELIRDTETLHEIYQRLIHAGDTAGIPVIATGNAHYLFEHDGIARKILIASQPGNPLNRSTLPEAHFRTTDEMLNEFHFLGEEKAHEIVVKNTNELADRIERVVPIKDELYTPRMEGANEEIRELSYANARKLYGEDLPQIVIDRLEKELKSIIGNGFAVIYLISQRLVKKSLDDGYLVGSRGSVGSSFVATMTEITEVNPLPPHYICPNCKTSEFFNDGSVGSGFDLPDKTCETCGAPLIKEGQDIPFETFLGFKGDKVPDIDLNFSGEYQPNAHNYTKVLFGEDKVFRAGTIGTVAEKTAFGYVKGYLNDQGIHKRGAEIDRLVKGCTGVKRTTGQHPGGIIVVPDYMDIYDFTPIQYPADDQNSAWMTTHFDFHSIHDNVLKLDILGHDDPTMIRMLQDLSGIDPKTIPVDDKEVMQIFSTPESLGVTEDEILCKTGTFGVPEFGTGFVRQMLEDTKPTTFSELVQISGLSHGTDVWLGNAQELIKTGICDLSSVIGCRDDIMVYLMYAGLEPSMAFKIMESVRKGKGLTEEMIETMKENEVPDWYLDSCLKIKYMFPKAHAAAYVLMAVRIAYFKVHHPLYYYASYFTIRASDFDLITMIKDKTSIRNTVKDMYSRYMDLGKKEKDVLTVLEIMNEMAHRGYRMQPISLEKSQAFEFIIEGETLIPPFISVPGLGENVAKRIVEARDDGPFLSKEDLNKKAGLSQKIIEYLDELGSLPNLPDKAQLSIFDM.

Residues 422 to 578 (YVVFDVETTG…YDTEATAYIF (157 aa)) enclose the Exonuclease domain.

Belongs to the DNA polymerase type-C family. PolC subfamily.

The protein resides in the cytoplasm. The enzyme catalyses DNA(n) + a 2'-deoxyribonucleoside 5'-triphosphate = DNA(n+1) + diphosphate. Functionally, required for replicative DNA synthesis. This DNA polymerase also exhibits 3' to 5' exonuclease activity. In Staphylococcus aureus (strain MRSA252), this protein is DNA polymerase III PolC-type.